We begin with the raw amino-acid sequence, 523 residues long: Magnesium/proton exchanger 1 (523 aa).

11 helical membrane-spanning segments follow: residues 24-44 (LLPI…CFIG), 88-108 (IADV…LATI), 125-145 (GTLV…CVVM), 157-177 (LGVW…LYII), 185-205 (VITL…LLHA), 325-345 (VIGI…AFVP), 349-369 (IAHG…IAYG), 377-397 (ISCV…AAGT), 428-448 (VNIY…NYFV), 461-481 (LSFS…VLVL), and 495-515 (MWAW…VVLS).

Belongs to the Ca(2+):cation antiporter (CaCA) (TC 2.A.19) family. MHX subfamily.

Its subcellular location is the vacuole membrane. Its function is as follows. Vacuolar transporter that exchanges protons with Mg(2+), Zn(2+) and Fe(2+) ions. May control the partitioning of Mg(2+) and Zn(2+) between plant organs. The polypeptide is Magnesium/proton exchanger 1 (MHX1) (Oryza sativa subsp. japonica (Rice)).